We begin with the raw amino-acid sequence, 403 residues long: RNA-binding motif, single-stranded-interacting protein 1 (403 aa).

Positions 30–56 (PAHPMAPPSPSTTSSNNNSSSSSNSGW) are disordered. Over residues 40–54 (STTSSNNNSSSSSNS) the composition is skewed to low complexity. 2 RRM domains span residues 62 to 135 (TNLY…MAKQ) and 141 to 226 (TNLY…FADG). At T208 the chain carries Phosphothreonine. A compositionally biased stretch (polar residues) spans 382-395 (GQQQVAVETSNDHS). The interval 382 to 403 (GQQQVAVETSNDHSPYTFPPNK) is disordered.

As to expression, ubiquitous. Expressed in all tissues except testis.

The protein resides in the nucleus. Single-stranded DNA binding protein that interacts with the region upstream of the MYC gene. Binds specifically to the DNA sequence motif 5'-[AT]CT[AT][AT]T-3'. Probably has a role in DNA replication. The sequence is that of RNA-binding motif, single-stranded-interacting protein 1 (Rbms1) from Mus musculus (Mouse).